The sequence spans 727 residues: Probable copper-importing P-type ATPase A (727 aa).

The Cytoplasmic portion of the chain corresponds to 1 to 94 (MATNTKMETF…QTYLRKMKFD (94 aa)). One can recognise an HMA domain in the interval 6–70 (KMETFVITGM…SVENIGYGAI (65 aa)). Cu(+)-binding residues include cysteine 17 and cysteine 20. Residues 95-115 (LIFSAILTLPLMLAMIAMMLG) traverse the membrane as a helical segment. Topologically, residues 116–119 (SHGP) are extracellular. The helical transmembrane segment at 120–137 (IVSFFHLSLVQLLFALPV) threads the bilayer. The Cytoplasmic segment spans residues 138–161 (QFYVGWRFYKGAYHALKTKAPNMD). The helical transmembrane segment at 162–181 (VLVAIGTSAAFALSIYNGFF) threads the bilayer. Over 182 to 187 (PSHSHD) the chain is Extracellular. Residues 188-203 (LYFESSSMIITLILLG) traverse the membrane as a helical segment. At 204–341 (KYLEHTAKSK…PIQQIADKIS (138 aa)) the chain is on the cytoplasmic side. The chain crosses the membrane as a helical span at residues 342 to 362 (GIFVPIVLFLALVTLLVTGWL). At 363-375 (TKDWQLALLHSVS) the chain is on the extracellular side. The helical transmembrane segment at 376-396 (VLVIACPCALGLATPTAIMVG) threads the bilayer. Topologically, residues 397 to 678 (TGVGAHNGIL…AATLKKIKQN (282 aa)) are cytoplasmic. Aspartate 425 functions as the 4-aspartylphosphate intermediate in the catalytic mechanism. Mg(2+)-binding residues include aspartate 621 and aspartate 625. A helical membrane pass occupies residues 679-698 (LFWAFIYNTIGIPFAAFGFL). The Extracellular segment spans residues 699-700 (NP). A helical transmembrane segment spans residues 701 to 721 (IIAGGAMAFSSISVLLNSLSL). Residues 722-727 (NRKTIK) are Cytoplasmic-facing.

This sequence belongs to the cation transport ATPase (P-type) (TC 3.A.3) family. Type IB subfamily. Monomer. Interacts with the copper chaperone CopZ.

The protein resides in the cell membrane. It catalyses the reaction Cu(+)(in) + ATP + H2O = Cu(+)(out) + ADP + phosphate + H(+). Inhibited by vanadate. Probably involved in copper import under copper limiting conditions. The protein is Probable copper-importing P-type ATPase A (copA) of Enterococcus hirae (strain ATCC 9790 / DSM 20160 / JCM 8729 / LMG 6399 / NBRC 3181 / NCIMB 6459 / NCDO 1258 / NCTC 12367 / WDCM 00089 / R).